Consider the following 93-residue polypeptide: MICAVYKSRRKAESYLFVEKRNDFERVPEALMDMFGEPQLVMMLPIEKRDHLGFADIKKVRSELKEKGFYLQLPPPVVNLLEQHKKEIGFNPD.

Residues 1-85 (MICAVYKSRR…PVVNLLEQHK (85 aa)) enclose the YcgL domain.

This is YcgL domain-containing protein Shal_1837 from Shewanella halifaxensis (strain HAW-EB4).